A 166-amino-acid polypeptide reads, in one-letter code: Urocortin-3 (166 aa).

Residues 1-23 (MLVPAPFLLVLLLLLGAPQVGLS) form the signal peptide. The propeptide occupies 24–123 (QRSPKAGSSP…QDKAKSDRRT (100 aa)). The segment covering 41–51 (REAEKSQRKDT) has biased composition (basic and acidic residues). The interval 41–123 (REAEKSQRKD…QDKAKSDRRT (83 aa)) is disordered. The segment covering 68–77 (EDQEGQEEED) has biased composition (acidic residues). Residues 86–96 (SVGGGGGGGAG) are compositionally biased toward gly residues. Residues 113–123 (SQDKAKSDRRT) show a composition bias toward basic and acidic residues. I162 bears the Isoleucine amide mark.

It belongs to the sauvagine/corticotropin-releasing factor/urotensin I family. In terms of assembly, binds with high affinity to CRF receptors 2-alpha and 2-beta.

The protein localises to the secreted. Suppresses food intake, delays gastric emptying and decreases heat-induced edema. Might represent an endogenous ligand for maintaining homeostasis after stress. This Bos taurus (Bovine) protein is Urocortin-3 (UCN3).